A 200-amino-acid polypeptide reads, in one-letter code: Exopolysaccharide production protein PSS (200 aa).

It belongs to the bacterial sugar transferase family.

This Rhizobium leguminosarum bv. phaseoli protein is Exopolysaccharide production protein PSS (pss).